The primary structure comprises 274 residues: RNA polymerase sigma factor SigI4 (274 aa).

Residues Glu87–Ile100 carry the Polymerase core binding motif. The segment at residues Leu226–Lys245 is a DNA-binding region (H-T-H motif).

The protein belongs to the sigma-70 factor family. SigI subfamily. As to quaternary structure, interacts with RsgI4.

The protein localises to the cytoplasm. Its activity is regulated as follows. Negatively regulated by the anti-sigma-I factor RsgI4. Binding of the polysaccharide substrate to RsgI4 may lead to the release and activation of SigI4. Functionally, sigma factors are initiation factors that promote the attachment of RNA polymerase to specific initiation sites and are then released. This sigma factor is involved in regulation of cellulosomal genes via an external polysaccharide-sensing mechanism. This is RNA polymerase sigma factor SigI4 from Acetivibrio thermocellus (strain ATCC 27405 / DSM 1237 / JCM 9322 / NBRC 103400 / NCIMB 10682 / NRRL B-4536 / VPI 7372) (Clostridium thermocellum).